A 312-amino-acid chain; its full sequence is DNA-directed RNA polymerase subunit alpha (312 aa).

Residues 1 to 229 (MLQYQIERID…ELFQPLATVT (229 aa)) form an alpha N-terminal domain (alpha-NTD) region. The tract at residues 240-312 (PSPEAQIPLE…ISIPQSRTSV (73 aa)) is alpha C-terminal domain (alpha-CTD).

Belongs to the RNA polymerase alpha chain family. As to quaternary structure, in cyanobacteria the RNAP catalytic core is composed of 2 alpha, 1 beta, 1 beta', 1 gamma and 1 omega subunit. When a sigma factor is associated with the core the holoenzyme is formed, which can initiate transcription.

It carries out the reaction RNA(n) + a ribonucleoside 5'-triphosphate = RNA(n+1) + diphosphate. DNA-dependent RNA polymerase catalyzes the transcription of DNA into RNA using the four ribonucleoside triphosphates as substrates. The protein is DNA-directed RNA polymerase subunit alpha of Prochlorococcus marinus (strain MIT 9301).